The primary structure comprises 496 residues: Glycerol kinase (496 aa).

Residue Thr14 coordinates ADP. ATP contacts are provided by Thr14 and Thr15. Residue Thr14 participates in sn-glycerol 3-phosphate binding. 4 residues coordinate sn-glycerol 3-phosphate: Arg84, Glu85, Tyr136, and Asp246. The glycerol site is built by Arg84, Glu85, Tyr136, Asp246, and Gln247. Residues Thr268 and Gly313 each coordinate ADP. Residues Thr268, Gly313, Gln317, and Gly414 each coordinate ATP. Residues Gly414 and Asn418 each coordinate ADP.

It belongs to the FGGY kinase family.

It catalyses the reaction glycerol + ATP = sn-glycerol 3-phosphate + ADP + H(+). Its pathway is polyol metabolism; glycerol degradation via glycerol kinase pathway; sn-glycerol 3-phosphate from glycerol: step 1/1. Its activity is regulated as follows. Inhibited by fructose 1,6-bisphosphate (FBP). Functionally, key enzyme in the regulation of glycerol uptake and metabolism. Catalyzes the phosphorylation of glycerol to yield sn-glycerol 3-phosphate. The chain is Glycerol kinase from Myxococcus xanthus (strain DK1622).